Consider the following 383-residue polypeptide: MNNFTLFLFSCLYFIGGNLKALVLGINTRPVVNSLKKLGFYVYSVSYYAPEDLNADEKYYLINPLVHGRLKENYDENKLIEIANKLADEVDCIFITSGVFEFENSKIPGWDNVIGNGPKKINEISNKYKTYKKLKNLGFNIPETKKINNKTQLYKFLEEFKTCILKPIYGSGGSILKIELNNFDDEIINEIKFPIIAQEYIRGKSFSANFIGNTFITFNKQIIIKGMYAGNLTPYINLPNKFVEIFGEVIESFELKGMSGIDFLIKDNGPYIVDINPRILGTYETIEMSASQNLAMVLLNNKYAKEIKPRKVYIKRILFAKEKIIANISKRDFIHDIPKKNAVIEKGEPIATVIAKENIKSIINSVYEECAEYEKRKEDRENI.

A helical transmembrane segment spans residues 6–26 (LFLFSCLYFIGGNLKALVLGI). Residues 131–303 (YKKLKNLGFN…LAMVLLNNKY (173 aa)) form the ATP-grasp domain.

The protein localises to the membrane. This is an uncharacterized protein from Methanocaldococcus jannaschii (strain ATCC 43067 / DSM 2661 / JAL-1 / JCM 10045 / NBRC 100440) (Methanococcus jannaschii).